Consider the following 175-residue polypeptide: Protein SELF-PRUNING (175 aa).

It belongs to the phosphatidylethanolamine-binding protein family.

It localises to the cytoplasm. Its function is as follows. Not known. In plants homozygous for the recessive allele of the SP gene, sympodial segments develop progressively fewer nodes until the shoot is terminated by two consecutive. inflorescences. The sequence is that of Protein SELF-PRUNING (SP) from Solanum lycopersicum (Tomato).